Here is a 206-residue protein sequence, read N- to C-terminus: Large ribosomal subunit protein uL4 (206 aa).

Positions 66–77 are enriched in basic residues; the sequence is QKGTGRARHHSA. Residues 66 to 96 form a disordered region; sequence QKGTGRARHHSARAPQFRGGGQAHGPVVRSH.

Belongs to the universal ribosomal protein uL4 family. In terms of assembly, part of the 50S ribosomal subunit.

In terms of biological role, one of the primary rRNA binding proteins, this protein initially binds near the 5'-end of the 23S rRNA. It is important during the early stages of 50S assembly. It makes multiple contacts with different domains of the 23S rRNA in the assembled 50S subunit and ribosome. Its function is as follows. Forms part of the polypeptide exit tunnel. This Brucella anthropi (strain ATCC 49188 / DSM 6882 / CCUG 24695 / JCM 21032 / LMG 3331 / NBRC 15819 / NCTC 12168 / Alc 37) (Ochrobactrum anthropi) protein is Large ribosomal subunit protein uL4.